The sequence spans 366 residues: tRNA/tmRNA (uracil-C(5))-methyltransferase (366 aa).

The S-adenosyl-L-methionine site is built by Gln-190, Tyr-218, Asn-223, Glu-239, and Asp-299. The active-site Nucleophile is the Cys-324. Residue Glu-358 is the Proton acceptor of the active site.

Belongs to the class I-like SAM-binding methyltransferase superfamily. RNA M5U methyltransferase family. TrmA subfamily.

It catalyses the reaction uridine(54) in tRNA + S-adenosyl-L-methionine = 5-methyluridine(54) in tRNA + S-adenosyl-L-homocysteine + H(+). The catalysed reaction is uridine(341) in tmRNA + S-adenosyl-L-methionine = 5-methyluridine(341) in tmRNA + S-adenosyl-L-homocysteine + H(+). Dual-specificity methyltransferase that catalyzes the formation of 5-methyluridine at position 54 (m5U54) in all tRNAs, and that of position 341 (m5U341) in tmRNA (transfer-mRNA). The polypeptide is tRNA/tmRNA (uracil-C(5))-methyltransferase (Escherichia fergusonii (strain ATCC 35469 / DSM 13698 / CCUG 18766 / IAM 14443 / JCM 21226 / LMG 7866 / NBRC 102419 / NCTC 12128 / CDC 0568-73)).